We begin with the raw amino-acid sequence, 273 residues long: Ribosomal RNA small subunit methyltransferase A (273 aa).

S-adenosyl-L-methionine is bound by residues N18, L20, G45, E66, D91, and N113.

It belongs to the class I-like SAM-binding methyltransferase superfamily. rRNA adenine N(6)-methyltransferase family. RsmA subfamily.

The protein localises to the cytoplasm. The catalysed reaction is adenosine(1518)/adenosine(1519) in 16S rRNA + 4 S-adenosyl-L-methionine = N(6)-dimethyladenosine(1518)/N(6)-dimethyladenosine(1519) in 16S rRNA + 4 S-adenosyl-L-homocysteine + 4 H(+). Functionally, specifically dimethylates two adjacent adenosines (A1518 and A1519) in the loop of a conserved hairpin near the 3'-end of 16S rRNA in the 30S particle. May play a critical role in biogenesis of 30S subunits. The chain is Ribosomal RNA small subunit methyltransferase A from Shigella boydii serotype 18 (strain CDC 3083-94 / BS512).